The following is a 535-amino-acid chain: Formate--tetrahydrofolate ligase (535 aa).

50–57 (TPAGEGKT) is a binding site for ATP.

Belongs to the formate--tetrahydrofolate ligase family.

The catalysed reaction is (6S)-5,6,7,8-tetrahydrofolate + formate + ATP = (6R)-10-formyltetrahydrofolate + ADP + phosphate. Its pathway is one-carbon metabolism; tetrahydrofolate interconversion. This chain is Formate--tetrahydrofolate ligase, found in Picrophilus torridus (strain ATCC 700027 / DSM 9790 / JCM 10055 / NBRC 100828 / KAW 2/3).